A 103-amino-acid chain; its full sequence is Ghrelin (103 aa).

An N-terminal signal peptide occupies residues 1–26 (MPLRRRASHMFVLLCALSLCVESVKG). The segment at 27 to 51 (GTSFLSPAQKPQGRRPPRMGRRDVA) is disordered. Residue Ser-29 is the site of O-decanoyl serine; alternate attachment. Ser-29 carries the O-hexanoyl serine; alternate lipid modification. Ser-29 carries O-octanoyl serine; alternate lipidation. A Glutamine amide modification is found at Gln-38. Met-45 carries the post-translational modification Methionine amide. A propeptide spans 49–103 (DVAEPEIPVIKEDDQFMMSAPFELSVSLSEAEYEKYGPVLQKVLVNLLGDSPLEF) (removed in mature form).

It belongs to the motilin family. In terms of processing, O-octanoylated by GOAT/MBOAT4. O-octanoylation or O-decanoylation is essential for activity. The O-decanoylated form differs in the length of the carbon backbone of the carboxylic acid forming an ester bond with Ser-29. As to expression, expressed in the telencephalon, hypothalamus, pituitary, intestine, liver, spleen and gill, with expression strongest in the intestine.

It localises to the secreted. Ligand for growth hormone secretagogue receptor type 1 (GHSR). Induces the release of growth hormone from the pituitary. Induces adiposity and stimulates gastric acid secretion. Involved in growth regulation. Has an appetite-stimulating effect. This is Ghrelin (ghrl) from Carassius auratus (Goldfish).